A 211-amino-acid chain; its full sequence is Rho-related GTP-binding protein RhoF (211 aa).

The residue at position 1 (methionine 1) is an N-acetylmethionine. 26–33 (GDGGCGKT) lines the GTP pocket. Positions 48-56 (YAPSVFEKY) match the Effector region motif. GTP contacts are provided by residues 73–77 (DTAGQ) and 131–134 (CKTD). Cysteine 208 is subject to Cysteine methyl ester. A lipid anchor (S-geranylgeranyl cysteine) is attached at cysteine 208. The propeptide at 209 to 211 (LLL) is removed in mature form.

This sequence belongs to the small GTPase superfamily. Rho family.

It is found in the cell membrane. Its subcellular location is the cytoplasm. The protein localises to the cytoskeleton. Functionally, plasma membrane-associated small GTPase which cycles between an active GTP-bound and an inactive GDP-bound state. Causes the formation of thin, actin-rich surface projections called filopodia. Functions cooperatively with CDC42 and Rac to generate additional structures, increasing the diversity of actin-based morphology. The sequence is that of Rho-related GTP-binding protein RhoF (RHOF) from Homo sapiens (Human).